Consider the following 641-residue polypeptide: Serine/threonine-protein kinase PK-1 (641 aa).

The Protein kinase domain occupies 18–280 (YRVDARIAVG…ARARDARARL (263 aa)). Residues 24–32 (IAVGGMATV) and Lys-47 contribute to the ATP site. The Proton acceptor role is filled by Asp-141. Residues 317–347 (LPVNEEDEGADAAHRTSRFRSPPPLPPRGRT) are disordered. PASTA domains are found at residues 375-441 (SGQF…TLSK), 442-508 (GPRT…LTVS), 509-576 (KGAP…TLSK), and 577-641 (GPEM…IEIR). Residues 469–494 (KPGMSTREFSDSVPAGSVISTEPGKG) are disordered.

This sequence belongs to the protein kinase superfamily. Ser/Thr protein kinase family. Post-translationally, autophosphorylated on threonine residue(s).

It catalyses the reaction L-seryl-[protein] + ATP = O-phospho-L-seryl-[protein] + ADP + H(+). The enzyme catalyses L-threonyl-[protein] + ATP = O-phospho-L-threonyl-[protein] + ADP + H(+). The polypeptide is Serine/threonine-protein kinase PK-1 (spk1) (Streptomyces toyocaensis).